A 185-amino-acid chain; its full sequence is Dual specificity protein phosphatase 3 (185 aa).

In terms of domain architecture, Tyrosine-protein phosphatase spans 28-179; it reads QPCNEVVPRV…LCQLNDRLAK (152 aa). Cysteine 124 serves as the catalytic Phosphocysteine intermediate.

The protein belongs to the protein-tyrosine phosphatase family. Non-receptor class dual specificity subfamily. In terms of assembly, microtubule inner protein component of sperm flagellar doublet microtubules. Interacts with VRK3; this interaction activates DUSP3 phosphatase activity.

The protein localises to the nucleus. It is found in the cytoplasm. Its subcellular location is the cytoskeleton. It localises to the flagellum axoneme. It carries out the reaction O-phospho-L-tyrosyl-[protein] + H2O = L-tyrosyl-[protein] + phosphate. The enzyme catalyses O-phospho-L-seryl-[protein] + H2O = L-seryl-[protein] + phosphate. It catalyses the reaction O-phospho-L-threonyl-[protein] + H2O = L-threonyl-[protein] + phosphate. In terms of biological role, shows activity both for tyrosine-protein phosphate and serine-protein phosphate, but displays a strong preference toward phosphotyrosines. Specifically dephosphorylates and inactivates ERK1 and ERK2. This is Dual specificity protein phosphatase 3 (Dusp3) from Mus musculus (Mouse).